The following is a 237-amino-acid chain: Bax inhibitor 1 (237 aa).

The Cytoplasmic segment spans residues 1 to 29 (MNIFDRKINFDALLKFSHITPSTQQHLKK). Lys-7 participates in a covalent cross-link: Glycyl lysine isopeptide (Lys-Gly) (interchain with G-Cter in ubiquitin). The chain crosses the membrane as a helical span at residues 30 to 50 (VYASFALCMFVAAAGAYVHMV). At 51-52 (TH) the chain is on the lumenal side. The helical transmembrane segment at 53-73 (FIQAGLLSALGSLILMIWLMA) threads the bilayer. Over 74-86 (TPHSHETEQKRLG) the chain is Cytoplasmic. The chain crosses the membrane as a helical span at residues 87–107 (LLAGFAFLTGVGLGPALEFCI). Residues 108 to 112 (AVNPS) are Lumenal-facing. The helical transmembrane segment at 113 to 133 (ILPTAFMGTAMIFTCFTLSAL) threads the bilayer. Residues 134–139 (YARRRS) lie on the Cytoplasmic side of the membrane. The helical transmembrane segment at 140 to 160 (YLFLGGILMSALSLLLLSSLG) threads the bilayer. Residues 161–166 (NVFFGS) are Lumenal-facing. Residues 167-187 (IWLFQANLYVGLVVMCGFVLF) traverse the membrane as a helical segment. Topologically, residues 188–206 (DTQLIIEKAEHGDQDYIWH) are cytoplasmic. Positions 207 to 227 (CIDLFLDFITVFRKLMMILAM) form an intramembrane region, helical. At 228–237 (NEKDKKKEKK) the chain is on the cytoplasmic side.

This sequence belongs to the BI1 family. As to quaternary structure, interacts with BCL2 and BCL2L1. Interacts with ERN1. Ubiquitinated by BFAR, leading to proteasomal degradation. As to expression, highly abundant in testis.

The protein localises to the endoplasmic reticulum membrane. In terms of biological role, endoplasmic reticulum (ER)-resident protein that confers cellular protection as an anti-apoptotic protein by limiting multiple stress-inducing pathways surrounding the endoplasmic reticulum and mitochondria. Inhibits the activities of the key sensor for the endoplasmic reticulum unfolded protein response IRE1alpha/ERN1 both directly and by blocking BAX/BAK binding. Modulates ER calcium homeostasis by acting as a calcium-leak channel. Negatively regulates autophagy and autophagosome formation, especially during periods of nutrient deprivation, and reduces cell survival during starvation. The polypeptide is Bax inhibitor 1 (TMBIM6) (Homo sapiens (Human)).